The primary structure comprises 233 residues: Nickel import system ATP-binding protein NikE (233 aa).

One can recognise an ABC transporter domain in the interval 2–228; that stretch reads IELKHVTFGY…DRHPYTKELV (227 aa). 35 to 42 serves as a coordination point for ATP; it reads GESGCGKS.

This sequence belongs to the ABC transporter superfamily. In terms of assembly, the complex is composed of two ATP-binding proteins (NikD and NikE), two transmembrane proteins (NikB and NikC) and a solute-binding protein (NikA).

The protein localises to the cell membrane. It carries out the reaction Ni(2+)(out) + ATP + H2O = Ni(2+)(in) + ADP + phosphate + H(+). Part of the ABC transporter complex NikABCDE (Opp2) involved in nickel import. Probably responsible for energy coupling to the transport system. This Staphylococcus aureus (strain USA300) protein is Nickel import system ATP-binding protein NikE.